The sequence spans 177 residues: von Ebner gland protein 2 (177 aa).

The N-terminal stretch at 1–18 is a signal peptide; that stretch reads MKALLLTFSLSLLAALQA. A disulfide bond links C80 and C172.

This sequence belongs to the calycin superfamily. Lipocalin family. In terms of assembly, homodimer.

The protein localises to the secreted. Could play a role in taste reception. Could be necessary for the concentration and delivery of sapid molecules in the gustatory system. This is von Ebner gland protein 2 (Vegp2) from Rattus norvegicus (Rat).